Here is a 370-residue protein sequence, read N- to C-terminus: Queuine tRNA-ribosyltransferase (370 aa).

The Proton acceptor role is filled by D89. Substrate-binding positions include 89–93 (DSGGF), D143, Q185, and G212. An RNA binding region spans residues 243–249 (GVGKPED). D262 (nucleophile) is an active-site residue. The interval 267–271 (TRNAR) is RNA binding; important for wobble base 34 recognition. Residues C300, C302, C305, and H331 each coordinate Zn(2+).

This sequence belongs to the queuine tRNA-ribosyltransferase family. In terms of assembly, homodimer. Within each dimer, one monomer is responsible for RNA recognition and catalysis, while the other monomer binds to the replacement base PreQ1. Zn(2+) serves as cofactor.

The enzyme catalyses 7-aminomethyl-7-carbaguanine + guanosine(34) in tRNA = 7-aminomethyl-7-carbaguanosine(34) in tRNA + guanine. It functions in the pathway tRNA modification; tRNA-queuosine biosynthesis. In terms of biological role, catalyzes the base-exchange of a guanine (G) residue with the queuine precursor 7-aminomethyl-7-deazaguanine (PreQ1) at position 34 (anticodon wobble position) in tRNAs with GU(N) anticodons (tRNA-Asp, -Asn, -His and -Tyr). Catalysis occurs through a double-displacement mechanism. The nucleophile active site attacks the C1' of nucleotide 34 to detach the guanine base from the RNA, forming a covalent enzyme-RNA intermediate. The proton acceptor active site deprotonates the incoming PreQ1, allowing a nucleophilic attack on the C1' of the ribose to form the product. After dissociation, two additional enzymatic reactions on the tRNA convert PreQ1 to queuine (Q), resulting in the hypermodified nucleoside queuosine (7-(((4,5-cis-dihydroxy-2-cyclopenten-1-yl)amino)methyl)-7-deazaguanosine). The chain is Queuine tRNA-ribosyltransferase from Pseudoalteromonas atlantica (strain T6c / ATCC BAA-1087).